The chain runs to 336 residues: tRNA(Ile)-lysidine synthase (336 aa).

ATP is bound at residue 40–45 (SGGQDS).

The protein belongs to the tRNA(Ile)-lysidine synthase family.

Its subcellular location is the cytoplasm. It catalyses the reaction cytidine(34) in tRNA(Ile2) + L-lysine + ATP = lysidine(34) in tRNA(Ile2) + AMP + diphosphate + H(+). Ligates lysine onto the cytidine present at position 34 of the AUA codon-specific tRNA(Ile) that contains the anticodon CAU, in an ATP-dependent manner. Cytidine is converted to lysidine, thus changing the amino acid specificity of the tRNA from methionine to isoleucine. The chain is tRNA(Ile)-lysidine synthase from Prochlorococcus marinus subsp. pastoris (strain CCMP1986 / NIES-2087 / MED4).